Reading from the N-terminus, the 282-residue chain is Pantothenate synthetase (282 aa).

30–37 (MGNLHDGH) contributes to the ATP binding site. Catalysis depends on His-37, which acts as the Proton donor. (R)-pantoate is bound at residue Gln-61. A beta-alanine-binding site is contributed by Gln-61. 149 to 152 (GEKD) is an ATP binding site. Residue Gln-155 coordinates (R)-pantoate. 186–189 (MSSR) contributes to the ATP binding site.

The protein belongs to the pantothenate synthetase family. As to quaternary structure, homodimer.

Its subcellular location is the cytoplasm. The catalysed reaction is (R)-pantoate + beta-alanine + ATP = (R)-pantothenate + AMP + diphosphate + H(+). It functions in the pathway cofactor biosynthesis; (R)-pantothenate biosynthesis; (R)-pantothenate from (R)-pantoate and beta-alanine: step 1/1. Catalyzes the condensation of pantoate with beta-alanine in an ATP-dependent reaction via a pantoyl-adenylate intermediate. This Alteromonas mediterranea (strain DSM 17117 / CIP 110805 / LMG 28347 / Deep ecotype) protein is Pantothenate synthetase.